The primary structure comprises 337 residues: Nicotinate-nucleotide--dimethylbenzimidazole phosphoribosyltransferase (337 aa).

The active-site Proton acceptor is the glutamate 305.

This sequence belongs to the CobT family.

It carries out the reaction 5,6-dimethylbenzimidazole + nicotinate beta-D-ribonucleotide = alpha-ribazole 5'-phosphate + nicotinate + H(+). It functions in the pathway nucleoside biosynthesis; alpha-ribazole biosynthesis; alpha-ribazole from 5,6-dimethylbenzimidazole: step 1/2. Functionally, catalyzes the synthesis of alpha-ribazole-5'-phosphate from nicotinate mononucleotide (NAMN) and 5,6-dimethylbenzimidazole (DMB). This chain is Nicotinate-nucleotide--dimethylbenzimidazole phosphoribosyltransferase, found in Roseobacter denitrificans (strain ATCC 33942 / OCh 114) (Erythrobacter sp. (strain OCh 114)).